We begin with the raw amino-acid sequence, 107 residues long: Thiosulfate sulfurtransferase GlpE (107 aa).

Positions 16 to 104 (KKRDIVIADV…WKAHHPTSDA (89 aa)) constitute a Rhodanese domain. Catalysis depends on cysteine 64, which acts as the Cysteine persulfide intermediate.

This sequence belongs to the GlpE family.

The protein resides in the cytoplasm. The catalysed reaction is thiosulfate + hydrogen cyanide = thiocyanate + sulfite + 2 H(+). It carries out the reaction thiosulfate + [thioredoxin]-dithiol = [thioredoxin]-disulfide + hydrogen sulfide + sulfite + 2 H(+). In terms of biological role, transferase that catalyzes the transfer of sulfur from thiosulfate to thiophilic acceptors such as cyanide or dithiols. May function in a CysM-independent thiosulfate assimilation pathway by catalyzing the conversion of thiosulfate to sulfite, which can then be used for L-cysteine biosynthesis. The sequence is that of Thiosulfate sulfurtransferase GlpE from Coxiella burnetii (strain CbuK_Q154) (Coxiella burnetii (strain Q154)).